Here is a 430-residue protein sequence, read N- to C-terminus: MVFEEFISTELKKEKKAFTEEFKEEKEINDNSNLKNDLLKEELQEKARIAELESRILKLELEKKELERENLQLMKENEILRRELDRMRVPPLIVGTVVDKVGERKVVVKSSTGPSFLVNVSHFVNPDDLAPGKRVCLNQQTLTVVDVLPENKDYRAKAMEVDERPNVRYEDIGGLEKQMQEIREVVELPLKHPELFEKVGIEPPKGILLYGPPGTGKTLLAKAVATETNATFIRVVGSELVKKFIGEGASLVKDIFKLAKEKAPSIIFIDEIDAIAAKRTDALTGGDREVQRTLMQLLAEMDGFDARGDVKIIGATNRPDILDPAILRPGRFDRIIEVPAPDEKGRLEILKIHTRKMNLAEDVNLEEIAKMTEGCVGAELKAICTEAGMNAIRELRDYVTMDDFRKAVEKIMEKKKVKVKEPAHLDVLYR.

The stretch at 9-89 (TELKKEKKAF…LRRELDRMRV (81 aa)) forms a coiled coil. ATP is bound by residues 214–219 (GTGKTL) and H353. The segment at 428–430 (LYR) is docks into pockets in the proteasome alpha-ring to cause gate opening.

The protein belongs to the AAA ATPase family. In terms of assembly, homohexamer. The hexameric complex has a two-ring architecture resembling a top hat that caps the 20S proteasome core at one or both ends. Alone, can form a complex composed of two stacked hexameric rings in vitro. Upon ATP-binding, the C-terminus of PAN interacts with the alpha-rings of the proteasome core by binding to the intersubunit pockets.

The protein resides in the cytoplasm. With respect to regulation, ATPase activity is inhibited by EDTA, N-ethylmaleimide (NEM) and p-chloromercuriphenyl-sulfonic acid (PCMS) in vitro. In terms of biological role, ATPase which is responsible for recognizing, binding, unfolding and translocation of substrate proteins into the archaeal 20S proteasome core particle. Is essential for opening the gate of the 20S proteasome via an interaction with its C-terminus, thereby allowing substrate entry and access to the site of proteolysis. Thus, the C-termini of the proteasomal ATPase function like a 'key in a lock' to induce gate opening and therefore regulate proteolysis. Unfolding activity requires energy from ATP hydrolysis, whereas ATP binding alone promotes ATPase-20S proteasome association which triggers gate opening, and supports translocation of unfolded substrates. In addition to ATP, is able to cleave other nucleotide triphosphates such as CTP, GTP and UTP, but hydrolysis of these other nucleotides is less effective in promoting proteolysis than ATP. Moreover, PAN by itself can function as a chaperone in vitro. This chain is Proteasome-activating nucleotidase, found in Methanocaldococcus jannaschii (strain ATCC 43067 / DSM 2661 / JAL-1 / JCM 10045 / NBRC 100440) (Methanococcus jannaschii).